Reading from the N-terminus, the 775-residue chain is Cation channel sperm-associated protein subunit epsilon-like protein (775 aa).

An N-terminal signal peptide occupies residues 1–20; that stretch reads MLARRVVAALLLWLSCCVSA. N62 and N114 each carry an N-linked (GlcNAc...) asparagine glycan.

It belongs to the CATSPERD family.

This Mus musculus (Mouse) protein is Cation channel sperm-associated protein subunit epsilon-like protein.